Here is a 711-residue protein sequence, read N- to C-terminus: Dixin (711 aa).

Leu-2 is lipidated: N-myristoyl glycine. Val-13 is modified (phosphoserine). The Calponin-homology (CH) domain occupies 20-153 (EQQLQAYVAW…LVLALAAHFK (134 aa)). The segment at 153–326 (KPGSSRTVSQ…LEKEMEEAKK (174 aa)) is actin-binding. Residue Ser-212 is modified to Phosphoserine. Disordered regions lie at residues 233-258 (GQQK…AKSE), 271-298 (VIIP…PGSR), and 584-623 (TQKK…SSPA). Low complexity predominate over residues 237 to 254 (SPSESSCSSLTSPSPIHS). A Phosphoserine modification is found at Ser-257. Residues 278-295 (IENRTDEPDSPSSRDWRP) are compositionally biased toward basic and acidic residues. The stretch at 279–452 (ENRTDEPDSP…NRLLGEYKKE (174 aa)) forms a coiled coil. Residues 597-623 (PRNQASSEYRASWPPNSTLPHSQSSPA) show a composition bias toward polar residues. Residues 600 to 680 (QASSEYRASW…HFKALDPEFG (81 aa)) enclose the DIX domain. Ser-618 carries the post-translational modification Phosphoserine.

Belongs to the DIXDC1 family. As to quaternary structure, may bind filamentous actin. Directly interacts (via DIX domain) with DVL2 (via DIX domain). Interacts with gamma-tubulin. Interacts with the complex composed of DVL2 and Rac. Interacts with AXIN1; competes with MAP3K1. Interacts with MAP3K4 preventing MAP3K4 interaction with AXIN1. In terms of processing, phosphorylated on tyrosine and serine residues. Polyubiquitinated, leading to its proteasomal degradation. WNT3A signaling increases DIXDC1 protein levels by inhibiting its ubiquitination and subsequent degradation. As to expression, abundantly expressed in brain and testis and to a lower extent in lung, kidney, colon, ovary and urinary bladder. Expressed in brain, liver, testis and spleen (at protein level). Expressed throughout the brain with strong expression in main and accessory olfactory bulbs, cerebral cortex, piriform cortex, hippocampus, habenular nucleus, dorsal thalamus, superior and inferior colliculi and cerebellum.

The protein resides in the cell junction. The protein localises to the focal adhesion. It localises to the cytoplasm. It is found in the cytoskeleton. Its subcellular location is the stress fiber. In terms of biological role, positive effector of the Wnt signaling pathway; activates WNT3A signaling via DVL2. Regulates JNK activation by AXIN1 and DVL2. This is Dixin (Dixdc1) from Mus musculus (Mouse).